Here is a 346-residue protein sequence, read N- to C-terminus: Proto-oncogene serine/threonine-protein kinase mos (346 aa).

The region spanning 60 to 341 (VCLLQRLGAG…RPLLVDLTSL (282 aa)) is the Protein kinase domain. ATP-binding positions include 66-74 (LGAGGFGSV) and lysine 87. The active-site Proton acceptor is aspartate 201.

Belongs to the protein kinase superfamily. Ser/Thr protein kinase family.

The catalysed reaction is L-seryl-[protein] + ATP = O-phospho-L-seryl-[protein] + ADP + H(+). It catalyses the reaction L-threonyl-[protein] + ATP = O-phospho-L-threonyl-[protein] + ADP + H(+). In Chlorocebus aethiops (Green monkey), this protein is Proto-oncogene serine/threonine-protein kinase mos.